A 218-amino-acid chain; its full sequence is Cytidylate kinase (218 aa).

Residue 7 to 15 (GPSASGKSS) participates in ATP binding.

The protein belongs to the cytidylate kinase family. Type 1 subfamily.

It localises to the cytoplasm. The catalysed reaction is CMP + ATP = CDP + ADP. It carries out the reaction dCMP + ATP = dCDP + ADP. This chain is Cytidylate kinase, found in Borrelia hermsii (strain HS1 / DAH).